Reading from the N-terminus, the 147-residue chain is Hemoglobin subunit beta (147 aa).

In terms of domain architecture, Globin spans 3–147 (EWTDKERTII…VVSALGKQYH (145 aa)). The heme b site is built by histidine 64 and histidine 93.

This sequence belongs to the globin family. In terms of assembly, heterotetramer of two alpha chains and two beta chains. As to expression, red blood cells.

Its function is as follows. Involved in oxygen transport from gills to the various peripheral tissues. The chain is Hemoglobin subunit beta from Trematomus newnesi (Dusky notothen).